A 1221-amino-acid polypeptide reads, in one-letter code: 2-oxoglutarate dehydrogenase E1/E2 component (1221 aa).

The tract at residues 2-40 is 2-oxoglutarate dehydrogenase E1, N-terminal part; the sequence is SSASTFGQNAWLVDEMFQQFQKDPKSVDKEWRELFEAQG. The tract at residues 22–107 is disordered; the sequence is QKDPKSVDKE…KLPEPGQTPI (86 aa). The span at 23–36 shows a compositional bias: basic and acidic residues; it reads KDPKSVDKEWRELF. A compositionally biased stretch (polar residues) spans 41–52; that stretch reads GPNTTPATTEAQ. Positions 41–89 are linker; the sequence is GPNTTPATTEAQPSAPKESAKPAPKAAPAAKAAPRVETKPADKTAPKAK. The segment covering 53–73 has biased composition (low complexity); the sequence is PSAPKESAKPAPKAAPAAKAA. A compositionally biased stretch (basic and acidic residues) spans 74–90; it reads PRVETKPADKTAPKAKE. A succinyltransferase E2 region spans residues 90–337; sequence ESSVPQQPKL…LRTMSRLLTD (248 aa). His316 serves as the catalytic Proton acceptor; for succinyltransferase activity. Residues 338 to 1221 form a 2-oxoglutarate dehydrogenase E1, C-terminal part region; the sequence is DSFWDEIFDA…KQLIDEAFEA (884 aa). Position 544 (Arg544) interacts with thiamine diphosphate. Residues His583 and Ser608 each contribute to the 2-oxoglutarate site. Thiamine diphosphate contacts are provided by Ser608, Leu610, Asp645, Ala646, Ala647, and Asn678. Asp645 serves as a coordination point for Mg(2+). Positions 678 and 680 each coordinate Mg(2+). Residue His1017 coordinates 2-oxoglutarate. Residues Thr1035, Arg1051, Lys1087, Ser1090, and Arg1144 each coordinate acetyl-CoA.

The protein in the N-terminal section; belongs to the alpha-ketoglutarate dehydrogenase family. It in the C-terminal section; belongs to the 2-oxoacid dehydrogenase family. As to quaternary structure, homodimer. Part of an unusual ODH/PDH supercomplex, consisting of AceE (E1), AceF (E2), and Lpd (E3) together with OdhA (E1+E2). Interacts with the FHA domain of unphosphorylated OdhI via its C-terminal dehydrogenase domain. The cofactor is Mg(2+). Thiamine diphosphate serves as cofactor.

It carries out the reaction N(6)-[(R)-lipoyl]-L-lysyl-[protein] + 2-oxoglutarate + H(+) = N(6)-[(R)-S(8)-succinyldihydrolipoyl]-L-lysyl-[protein] + CO2. It catalyses the reaction N(6)-[(R)-dihydrolipoyl]-L-lysyl-[protein] + succinyl-CoA = N(6)-[(R)-S(8)-succinyldihydrolipoyl]-L-lysyl-[protein] + CoA. It functions in the pathway carbohydrate metabolism; tricarboxylic acid cycle; succinyl-CoA from 2-oxoglutarate (dehydrogenase route): step 1/1. Its activity is regulated as follows. Inhibited by unphosphorylated OdhI, but not by phosphorylated OdhI. Its function is as follows. Catalyzes the E1 and E2 reactions as part of 2-oxoglutarate dehydrogenase (ODH) activity, to convert 2-oxoglutarate to succinyl-CoA and CO(2). OdhA has reductase activity with 2-oxoglutarate but does not react with pyruvate, and also displays transsuccinylase but no transacetylase activity. Since OdhA is not lipoylated, the succinyltransferase activity of its E2 domain is dependent on lipoyl residues of the acetyltransferase AceF. The polypeptide is 2-oxoglutarate dehydrogenase E1/E2 component (Corynebacterium glutamicum (strain ATCC 13032 / DSM 20300 / JCM 1318 / BCRC 11384 / CCUG 27702 / LMG 3730 / NBRC 12168 / NCIMB 10025 / NRRL B-2784 / 534)).